We begin with the raw amino-acid sequence, 528 residues long: Potassium voltage-gated channel subfamily A member 3 (528 aa).

Residues 1 to 32 (MTVVPGDHLLEPEAAGGGGGDPPQGGCGSGGG) form a disordered region. Over 1-187 (MTVVPGDHLL…EYPESSGPAR (187 aa)) the chain is Cytoplasmic. Residues 15 to 32 (AGGGGGDPPQGGCGSGGG) are compositionally biased toward gly residues. A helical transmembrane segment spans residues 188–206 (GIAIVSVLVILISIVIFCL). Residues 207 to 247 (ETLPEFRDEKDYPASPSQDVFEAANNSTSGAPSGASSFSDP) lie on the Extracellular side of the membrane. A glycan (N-linked (GlcNAc...) asparagine) is linked at asparagine 232. The helical transmembrane segment at 248–269 (FFVVETLCIIWFSFELLVRFFA) threads the bilayer. Cysteine 270 carries the S-palmitoyl cysteine lipid modification. At 270–280 (CPSKATFSRNI) the chain is on the cytoplasmic side. Residues 281–301 (MNLIDIVAIIPYFITLGTELA) form a helical membrane-spanning segment. At 302-315 (ERQGNGQQAMSLAI) the chain is on the extracellular side. Residues 316-334 (LRVIRLVRVFRIFKLSRHS) form a helical; Voltage-sensor membrane-spanning segment. At 335 to 350 (KGLQILGQTLKASMRE) the chain is on the cytoplasmic side. The helical transmembrane segment at 351-370 (LGLLIFFLFIGVILFSSAVY) threads the bilayer. Residues 371–411 (FAEADDPSSGFNSIPDAFWWAVVTMTTVGYGDMHPVTIGGK) lie on the Extracellular side of the membrane. The short motif at 397-402 (TVGYGD) is the Selectivity filter element. A helical membrane pass occupies residues 412-434 (IVGSLCAIAGVLTIALPVPVIVS). Over 435-528 (NFNYFYHRET…VNIKKIFTDV (94 aa)) the chain is Cytoplasmic. The tract at residues 435 to 528 (NFNYFYHRET…VNIKKIFTDV (94 aa)) is interaction with KCNE4. Tyrosine 452 is modified (phosphotyrosine). Phosphoserine; by PKA is present on serine 473. Residues 526-528 (TDV) carry the PDZ-binding motif.

This sequence belongs to the potassium channel family. A (Shaker) (TC 1.A.1.2) subfamily. Kv1.3/KCNA3 sub-subfamily. As to quaternary structure, homotetramer. Forms heterooligomers with KCNE4 which inhibits KCNA3 activity by impairing localization to the cell membrane. The stoichiometry of KCNA3 and KCNE4 in the heterooligomers are 4:1, 4:2, 4:3 or 4:4 respectively. Increasing the number of KCNE4 subunits steadily slows the activation KCNA3 and decreases its abundance at the cell membrane. However, a single subunit of KCNE4 is sufficient for the cooperative enhancement of the inactivating function of the channel. Interacts with SEC24D; this interaction is reduced in the presence of KCNE4. Interacts with DLG1, DLG2 and DLG4 via their PDZ domains. Post-translationally, N-glycosylation promotes the cell surface expression. Phosphorylation on Tyr-452 inhibits its channel activity.

It is found in the cell membrane. It catalyses the reaction K(+)(in) = K(+)(out). With respect to regulation, activity is up-regulated by JAK2. In terms of biological role, mediates the voltage-dependent potassium ion permeability of excitable membranes. Assuming opened or closed conformations in response to the voltage difference across the membrane, the protein forms a potassium-selective channel through which potassium ions may pass in accordance with their electrochemical gradient. This chain is Potassium voltage-gated channel subfamily A member 3 (Kcna3), found in Mus musculus (Mouse).